The primary structure comprises 229 residues: UPF0488 protein C8orf33 homolog (229 aa).

Ala2 carries the post-translational modification N-acetylalanine. Omega-N-methylarginine is present on Arg27. The interval 55–101 (SRAHPLGDEGGTASKKQNKKKKTRNRASVANGGEKASEKLAPEEVPL) is disordered. Basic residues predominate over residues 70–79 (KQNKKKKTRN). The residue at position 82 (Ser82) is a Phosphoserine.

It belongs to the UPF0488 family.

This Pongo abelii (Sumatran orangutan) protein is UPF0488 protein C8orf33 homolog.